Consider the following 329-residue polypeptide: Putative HTH-type transcriptional regulatory protein APE_0778 (329 aa).

The HTH cro/C1-type domain occupies 142–200 (LREKRLEKGLSLGHLAYMLKTSRKSIYEYERGVMSPSVEKAEKLVDILGEEILEPIDIL). Residues 153-172 (LGHLAYMLKTSRKSIYEYER) constitute a DNA-binding region (H-T-H motif).

The polypeptide is Putative HTH-type transcriptional regulatory protein APE_0778 (Aeropyrum pernix (strain ATCC 700893 / DSM 11879 / JCM 9820 / NBRC 100138 / K1)).